Here is a 270-residue protein sequence, read N- to C-terminus: Phosphonoacetaldehyde hydrolase (270 aa).

Catalysis depends on aspartate 11, which acts as the Nucleophile. Mg(2+) is bound by residues aspartate 11 and alanine 13. Catalysis depends on lysine 53, which acts as the Schiff-base intermediate with substrate. A Mg(2+)-binding site is contributed by aspartate 187.

Belongs to the HAD-like hydrolase superfamily. PhnX family. Homodimer. Mg(2+) serves as cofactor.

It catalyses the reaction phosphonoacetaldehyde + H2O = acetaldehyde + phosphate + H(+). Functionally, involved in phosphonate degradation. This is Phosphonoacetaldehyde hydrolase from Salmonella enteritidis PT4 (strain P125109).